The chain runs to 346 residues: MIRNLYYEEQALMILNQNCLPEELVYERCERPEEVVAAIKGLKVRGAPLIGVTAAFGLAMAFSGYSGTGEARDVYFSRMKELFAATRPTAVNLFWALERMERVYRENHHLSPEELARRLCQEAQNLYKEDIRVNEAIGEQGQELLGEGSRVMTICNAGALATCGYGTALGVIRSAARRNKIEMVWACETRPVLQGSRLTVWELWQDKIPVTLLTDNMAGYTMSLGKVDAVITGADRIATNGDTANKIGTYSLAVLAKYHGIPFYVAAPLSTFDWNIKQGGEIPIEERSAEEVRTIKGSCLTVPVVDVFNPAFDITPEHLITAIICEKGIIRPPFGAAIKIWGREGE.

Substrate-binding positions include 45–47 (RGA), Arg87, and Gln194. Asp235 functions as the Proton donor in the catalytic mechanism. Substrate is bound at residue 245 to 246 (NK).

This sequence belongs to the eIF-2B alpha/beta/delta subunits family. MtnA subfamily.

The catalysed reaction is 5-(methylsulfanyl)-alpha-D-ribose 1-phosphate = 5-(methylsulfanyl)-D-ribulose 1-phosphate. Its pathway is amino-acid biosynthesis; L-methionine biosynthesis via salvage pathway; L-methionine from S-methyl-5-thio-alpha-D-ribose 1-phosphate: step 1/6. Catalyzes the interconversion of methylthioribose-1-phosphate (MTR-1-P) into methylthioribulose-1-phosphate (MTRu-1-P). In Syntrophomonas wolfei subsp. wolfei (strain DSM 2245B / Goettingen), this protein is Methylthioribose-1-phosphate isomerase.